The sequence spans 500 residues: Probable cytosol aminopeptidase (500 aa).

Mn(2+) is bound by residues Lys264 and Asp269. The active site involves Lys276. Residues Asp287, Asp346, and Glu348 each contribute to the Mn(2+) site. Arg350 is an active-site residue.

This sequence belongs to the peptidase M17 family. The cofactor is Mn(2+).

It localises to the cytoplasm. The enzyme catalyses Release of an N-terminal amino acid, Xaa-|-Yaa-, in which Xaa is preferably Leu, but may be other amino acids including Pro although not Arg or Lys, and Yaa may be Pro. Amino acid amides and methyl esters are also readily hydrolyzed, but rates on arylamides are exceedingly low.. The catalysed reaction is Release of an N-terminal amino acid, preferentially leucine, but not glutamic or aspartic acids.. Its function is as follows. Presumably involved in the processing and regular turnover of intracellular proteins. Catalyzes the removal of unsubstituted N-terminal amino acids from various peptides. The sequence is that of Probable cytosol aminopeptidase from Chlamydia abortus (strain DSM 27085 / S26/3) (Chlamydophila abortus).